We begin with the raw amino-acid sequence, 335 residues long: Calcium-binding protein TgpCaBP (335 aa).

Residues 30–50 (LPLCVFSLFLFSFAFSALSGA) traverse the membrane as a helical segment. 4 consecutive EF-hand domains span residues 113-148 (MHQH…SLDQ), 153-188 (QHKK…GKDE), 190-225 (LMKI…GSLN), and 227-262 (VEKT…PHSH). The Ca(2+) site is built by Asp126, Asp128, Asp130, Lys132, Glu137, Asp166, Asp168, Asp170, Glu177, Asp203, Asn205, Asp207, Lys209, Glu214, Asp240, Asn242, Asp244, and Glu251. A Prevents secretion from ER motif is present at residues 332–335 (HDEL).

It is found in the endoplasmic reticulum membrane. It localises to the cytoplasm. The protein resides in the cytosol. Functionally, calcium-binding protein. Participates in the efflux of intracellular Ca(2+) and storage of Ca(2+) in the endoplasmic reticulum. Required for gliding, host cell invasion and egress. Required for microneme secretion. This is Calcium-binding protein TgpCaBP from Toxoplasma gondii.